Consider the following 306-residue polypeptide: Protoheme IX farnesyltransferase (306 aa).

9 consecutive transmembrane segments (helical) span residues V32 to L52, I58 to V78, N103 to V123, L126 to L146, N153 to T173, A180 to I200, I227 to S247, W249 to L269, and A278 to L298.

Belongs to the UbiA prenyltransferase family. Protoheme IX farnesyltransferase subfamily.

The protein resides in the cell inner membrane. It carries out the reaction heme b + (2E,6E)-farnesyl diphosphate + H2O = Fe(II)-heme o + diphosphate. It functions in the pathway porphyrin-containing compound metabolism; heme O biosynthesis; heme O from protoheme: step 1/1. In terms of biological role, converts heme B (protoheme IX) to heme O by substitution of the vinyl group on carbon 2 of heme B porphyrin ring with a hydroxyethyl farnesyl side group. The chain is Protoheme IX farnesyltransferase from Colwellia psychrerythraea (strain 34H / ATCC BAA-681) (Vibrio psychroerythus).